Here is a 280-residue protein sequence, read N- to C-terminus: Large ribosomal subunit protein uL2 (280 aa).

Disordered regions lie at residues 1–47 (MAIR…NVHG) and 224–280 (VVMN…SKKR). Residues 23–33 (EITRSTPEKSL) are compositionally biased toward basic and acidic residues. Residues 37-47 (LPKKGGRNVHG) show a composition bias toward basic residues. A compositionally biased stretch (polar residues) spans 258–268 (RNPNRYSNNMI). The segment covering 270 to 280 (QRRRTNKSKKR) has biased composition (basic residues).

It belongs to the universal ribosomal protein uL2 family. As to quaternary structure, part of the 50S ribosomal subunit. Forms a bridge to the 30S subunit in the 70S ribosome.

Its function is as follows. One of the primary rRNA binding proteins. Required for association of the 30S and 50S subunits to form the 70S ribosome, for tRNA binding and peptide bond formation. It has been suggested to have peptidyltransferase activity; this is somewhat controversial. Makes several contacts with the 16S rRNA in the 70S ribosome. The chain is Large ribosomal subunit protein uL2 from Corynebacterium diphtheriae (strain ATCC 700971 / NCTC 13129 / Biotype gravis).